The following is a 430-amino-acid chain: Adenylosuccinate synthetase (430 aa).

GTP contacts are provided by residues 12–18 (GDEGKGK) and 40–42 (GHT). The active-site Proton acceptor is D13. Residues D13 and G40 each contribute to the Mg(2+) site. IMP contacts are provided by residues 13–16 (DEGK), 38–41 (NAGH), T128, R142, Q223, T238, and R302. H41 acts as the Proton donor in catalysis. 298 to 304 (TTTGRPR) provides a ligand contact to substrate. Residues R304, 330–332 (SID), and 413–415 (SVG) each bind GTP.

This sequence belongs to the adenylosuccinate synthetase family. In terms of assembly, homodimer. The cofactor is Mg(2+).

The protein localises to the cytoplasm. It catalyses the reaction IMP + L-aspartate + GTP = N(6)-(1,2-dicarboxyethyl)-AMP + GDP + phosphate + 2 H(+). Its pathway is purine metabolism; AMP biosynthesis via de novo pathway; AMP from IMP: step 1/2. Functionally, plays an important role in the de novo pathway of purine nucleotide biosynthesis. Catalyzes the first committed step in the biosynthesis of AMP from IMP. The sequence is that of Adenylosuccinate synthetase from Lactococcus lactis subsp. lactis (strain IL1403) (Streptococcus lactis).